We begin with the raw amino-acid sequence, 393 residues long: MAKESYKREKPHVNIGTIGHVDHGKTTLTAAITKVLSEKGQAQKMDFDEIDKAPEEKERGITISTSHVEYETPSRHYAHIDCPGHADYVKNMITGAAQMDGAILVVAATDGPMPQTREHILLAKQVNVPSIVVFMNKVDIADPELIELVEMELRELLSSYGFPGDDIPIIQGSALGALNGEAEWVGKIEELMEAVDNYIPTPVRDVDKPFLMPVEDVFSISGRGTVGTGRIERGVIKINEEVELVGIRPTKKSVVTGIEMFRKLLDQGEAGDNAGLLLRGVNKDELERGMVIAKPGSITPHTKFKAEVYILKKEEGGRHTPFFNGYRPQFYFRTTDVTGSVNLPDGVEMVMPGDNLSIEAELIAPIAMDEGLRFAIREGGRTVGAGTVTSIIE.

Positions 10–203 (KPHVNIGTIG…AVDNYIPTPV (194 aa)) constitute a tr-type G domain. The segment at 19-26 (GHVDHGKT) is G1. 19-26 (GHVDHGKT) is a GTP binding site. Threonine 26 contacts Mg(2+). Positions 60–64 (GITIS) are G2. A G3 region spans residues 81–84 (DCPG). Residues 81–85 (DCPGH) and 136–139 (NKVD) contribute to the GTP site. Residues 136 to 139 (NKVD) are G4. The interval 173-175 (SAL) is G5.

Belongs to the TRAFAC class translation factor GTPase superfamily. Classic translation factor GTPase family. EF-Tu/EF-1A subfamily. As to quaternary structure, monomer.

The protein localises to the cytoplasm. The catalysed reaction is GTP + H2O = GDP + phosphate + H(+). Functionally, GTP hydrolase that promotes the GTP-dependent binding of aminoacyl-tRNA to the A-site of ribosomes during protein biosynthesis. This chain is Elongation factor Tu, found in Chloroherpeton thalassium (strain ATCC 35110 / GB-78).